A 289-amino-acid chain; its full sequence is Probable vesicular-fusion protein sec17 homolog (289 aa).

A Phosphoserine modification is found at Ser-76.

The protein belongs to the SNAP family.

The protein localises to the membrane. Required for vesicular transport between the endoplasmic reticulum and the Golgi apparatus. In Schizosaccharomyces pombe (strain 972 / ATCC 24843) (Fission yeast), this protein is Probable vesicular-fusion protein sec17 homolog (sec17).